A 336-amino-acid polypeptide reads, in one-letter code: MHASLASYAAAAMPALDLRPEIAHAHQPVMSPSHHGWDGNGATAVPTPMPKRLDGKVAIVTGGARGIGEAIVRLFAKHGARVVIADIDDAAGEALASALGPQVSFVRCDVSVEDDVRRAVDWALSRHGGRLDVYCNNAGVLGRQTRAARSILSFDAAEFDRVLRVNALGAALGMKHAARAMAPRRAGSIVSVASVAAVLGGLGPHAYTASKHAIVGLTKNAACELRAHGVRVNCVSPFGVATPMLINAWRQGHDDATADADRDLDLDLDVTVPSDQEVEKMEEVVRGLATLKGPTLRPRDIAEAVLFLASDEARYISGHNLVVDGGVTTSRNLIGL.

An NAD(+)-binding site is contributed by 59–83 (IVTGGARGIGEAIVRLFAKHGARVV). Serine 194 is a binding site for substrate. Tyrosine 207 serves as the catalytic Proton acceptor.

Belongs to the short-chain dehydrogenases/reductases (SDR) family.

In terms of biological role, required for stage-specific floral organ abortion. In Zea mays (Maize), this protein is Sex determination protein tasselseed-2 (TS2).